The chain runs to 428 residues: A-kinase anchor protein 5 (428 aa).

The essential to the intracellular anchoring function stretch occupies residues 1 to 170; that stretch reads MEITVSEIQV…VTKTQTQSDD (170 aa). Disordered stretches follow at residues 1 to 207 and 237 to 313; these read MEIT…SPGE and LEEK…TELS. The segment covering 10–32 has biased composition (basic and acidic residues); it reads VESKDETRSAEVRPQDERQEEKA. Residue Cys-36 is the site of S-palmitoyl cysteine attachment. Residues 37–48 are compositionally biased toward basic residues; it reads FKRRKKAAKAMK. The segment covering 57–68 has biased composition (basic and acidic residues); it reads DAAKKCPPEARA. The AKAP CaM-binding signature appears at 76-96; sequence GGAWDSIKRLVTRRKRSESSK. A Phosphothreonine; by PKC modification is found at Thr-87. Position 92 is a phosphoserine; by PKA (Ser-92). Residue Ser-94 is modified to Phosphoserine; by PKC. Residue Cys-129 is the site of S-palmitoyl cysteine attachment. Positions 133 to 156 are enriched in basic and acidic residues; sequence SKGEKRSNHSKIIEDSDRSVKVQE. A compositionally biased stretch (polar residues) spans 161-170; sequence VTKTQTQSDD. Composition is skewed to basic and acidic residues over residues 171–191 and 290–311; these read QATK…KGDD and PDWK…KDTE. Residues 389–410 are RII-beta subunit binding domain; that stretch reads YETLLIETASSLVKNAIQLSIE. The tract at residues 411–428 is tethers NFATC2 to CRAC channels; sequence QLVNEMASDDNTINNRLQ.

In terms of assembly, binding protein for dimer of the RII-beta regulatory subunit of cAMP-dependent protein kinase (PKA) and also for the protein kinase C (PKC) and the phosphatase calcineurin (PP2B). Each enzyme is inhibited when bound to the anchoring protein. Also binds the beta2-adrenergic receptor. Part of a complex containing AKAP5, ADCY5, ADCY6 and PDE4C. Interacts with ADCY8, and enhances its phosphorylation at lipid rafts. Interacts with ORAI1 (isoform alpha) (via N-terminus) upon store depletion and in response to LTC4. Does not interact with ORAI2 and ORAI3 paralogs. Interacts (via leucine zipper domain) with NFATC2/NFAT1. Interacts with calmodulin; the interaction is calcium-independent. Interacts with KCNQ2; the interaction may help KCNQ2 channel complex to retain calcium-bound calmodulin. In terms of processing, palmitoylated. Palmitoylation at Cys-36 and Cys-129 play a key role in the targeting of AKAP5 to lipid rafts. Palmitoylation by ZDHHC2 is required for AKAP5 function in LTP-stimulated recycling endosome exocytosis. As to expression, predominantly in brain, and to a lesser extent in adrenal medulla, lung and anterior pituitary.

The protein resides in the postsynaptic recycling endosome membrane. In terms of biological role, multivalent scaffold protein that anchors the cAMP-dependent protein kinase/PKA to cytoskeletal and/or organelle-associated proteins, targeting the signal carried by cAMP to specific intracellular effectors. Association with the beta2-adrenergic receptor (beta2-AR) not only regulates beta2-AR signaling pathway, but also the activation by PKA by switching off the beta2-AR signaling cascade. Plays a role in long term synaptic potentiation by regulating protein trafficking from the dendritic recycling endosomes to the plasma membrane and controlling both structural and functional plasticity at excitatory synapses. Associates with ORAI1 pore-forming subunit of CRAC channels in Ca(2+) signaling microdomains where it recruits NFATC2/NFAT1 and couples store-operated Ca(2+) influx to calmodulin and calcineurin signaling and activation of NFAT-dependent transcriptional responses. In Bos taurus (Bovine), this protein is A-kinase anchor protein 5 (AKAP5).